Consider the following 372-residue polypeptide: Tyrosine--tRNA ligase (372 aa).

Tyr37, Tyr169, Gln173, Asp176, and Gln191 together coordinate L-tyrosine. Residues 246 to 250 (KMSKS) carry the 'KMSKS' region motif. Lys249 serves as a coordination point for ATP.

It belongs to the class-I aminoacyl-tRNA synthetase family. TyrS type 4 subfamily. In terms of assembly, homodimer.

The protein localises to the cytoplasm. The enzyme catalyses tRNA(Tyr) + L-tyrosine + ATP = L-tyrosyl-tRNA(Tyr) + AMP + diphosphate + H(+). In terms of biological role, catalyzes the attachment of tyrosine to tRNA(Tyr) in a two-step reaction: tyrosine is first activated by ATP to form Tyr-AMP and then transferred to the acceptor end of tRNA(Tyr). This Pyrobaculum calidifontis (strain DSM 21063 / JCM 11548 / VA1) protein is Tyrosine--tRNA ligase.